Reading from the N-terminus, the 204-residue chain is ATP phosphoribosyltransferase (204 aa).

Belongs to the ATP phosphoribosyltransferase family. Short subfamily. In terms of assembly, heteromultimer composed of HisG and HisZ subunits.

It is found in the cytoplasm. It catalyses the reaction 1-(5-phospho-beta-D-ribosyl)-ATP + diphosphate = 5-phospho-alpha-D-ribose 1-diphosphate + ATP. Its pathway is amino-acid biosynthesis; L-histidine biosynthesis; L-histidine from 5-phospho-alpha-D-ribose 1-diphosphate: step 1/9. In terms of biological role, catalyzes the condensation of ATP and 5-phosphoribose 1-diphosphate to form N'-(5'-phosphoribosyl)-ATP (PR-ATP). Has a crucial role in the pathway because the rate of histidine biosynthesis seems to be controlled primarily by regulation of HisG enzymatic activity. The chain is ATP phosphoribosyltransferase from Leptospira biflexa serovar Patoc (strain Patoc 1 / Ames).